Consider the following 437-residue polypeptide: Epsilon-sarcoglycan (437 aa).

The Extracellular segment spans residues 1-317; that stretch reads MQLPRWWELG…LKSRDYYTDF (317 aa). N-linked (GlcNAc...) asparagine glycosylation is present at N200. A helical membrane pass occupies residues 318–338; the sequence is LITLAVPSAVALVLFLILAYI. Residues 339–437 are Cytoplasmic-facing; the sequence is MCCRREGVEK…QQQTTGKWYP (99 aa).

Belongs to the sarcoglycan alpha/epsilon family. In terms of processing, N-glycosylated. Post-translationally, ubiquitinated, leading to its degradation by the proteasome.

It is found in the cell membrane. Its subcellular location is the sarcolemma. The protein localises to the cytoplasm. It localises to the cytoskeleton. The protein resides in the cell projection. It is found in the dendrite. Its subcellular location is the golgi apparatus. Component of the sarcoglycan complex, a subcomplex of the dystrophin-glycoprotein complex which forms a link between the F-actin cytoskeleton and the extracellular matrix. This chain is Epsilon-sarcoglycan, found in Pongo abelii (Sumatran orangutan).